The chain runs to 156 residues: Endogenous retrovirus group K member 18 Pro protein (156 aa).

The 76-residue stretch at 21-96 folds into the Peptidase A2 domain; it reads LEGLVDTGAD…IPLNLWGRDL (76 aa). Aspartate 26 is an active-site residue. The 46-residue stretch at 111 to 156 folds into the G-patch domain; the sequence is YSPMSQKIMTKMGYIPGKGLGKNEDGIKVPIEAKINHGREGTGYPF.

The protein belongs to the peptidase A2 family. HERV class-II K(HML-2) subfamily. In terms of assembly, active as a homodimer. Post-translationally, autoproteolytically processed at the N-terminus. Expected C-terminal autoprocessing not detected. The sequence shown is that of the processed Pro protein.

The catalysed reaction is Processing at the authentic HIV-1 PR recognition site and release of the mature p17 matrix and the p24 capsid protein, as a result of the cleavage of the -SQNY-|-PIVQ- cleavage site.. In terms of biological role, retroviral proteases have roles in the processing of the primary translation products and the maturation of the viral particle. Endogenous Pro proteins may have kept, lost or modified their original function during evolution. The protein is Endogenous retrovirus group K member 18 Pro protein (ERVK-18) of Homo sapiens (Human).